The chain runs to 828 residues: Isethionate sulfite-lyase (828 aa).

The region spanning 30 to 698 is the PFL domain; sequence ERVFTILESF…VVSATPNGRK (669 aa). 2-hydroxyethane-1-sulfonate-binding positions include R187, Q191, 466–468, and R676; that span reads CTE. The Cysteine radical intermediate role is filled by C466. E468 serves as the catalytic Proton acceptor. Positions 705–828 constitute a Glycine radical domain; that stretch reads DGSSASHGAD…LIARTGHDVM (124 aa). G803 carries the post-translational modification Glycine radical.

It belongs to the glycyl radical enzyme (GRE) family. In terms of assembly, homodimer. Post-translationally, requires the activating protein IseH to generate the key active site glycyl radical on Gly-803 that is involved in catalysis.

It carries out the reaction 2-hydroxyethane-1-sulfonate = acetaldehyde + sulfite + H(+). It participates in organosulfur degradation; alkanesulfonate degradation. In terms of biological role, involved in an anaerobic respiration pathway that converts the sulfonate isethionate (2-hydroxyethanesulfonate) to ammonia, acetate and sulfide. Catalyzes the radical-mediated C-S bond cleavage of isethionate (2-hydroxyethanesulfonate) to form sulfite and acetaldehyde. Shows no activity with taurine or ethanolamine as substrates. The polypeptide is Isethionate sulfite-lyase (Nitratidesulfovibrio vulgaris (strain ATCC 29579 / DSM 644 / CCUG 34227 / NCIMB 8303 / VKM B-1760 / Hildenborough) (Desulfovibrio vulgaris)).